The primary structure comprises 479 residues: Transmembrane protein 161A (479 aa).

An N-terminal signal peptide occupies residues 1–28 (MAVLGVQLVVTLLTATLMHRLAPHCSFA). Topologically, residues 29 to 98 (RWLLCNGSLF…LTTVDALVLR (70 aa)) are extracellular. N34 carries N-linked (GlcNAc...) asparagine glycosylation. Phosphoserine is present on S69. A helical membrane pass occupies residues 99 to 119 (FFLEYQWFVDFAVYSGGVYLF). The Cytoplasmic portion of the chain corresponds to 120 to 134 (TEAYYYMLGPAKETN). The chain crosses the membrane as a helical span at residues 135 to 155 (IAVFWCLLTVTFSIKMFLTVT). Residues 156–166 (RLYFSAEEGGE) are Extracellular-facing. A helical transmembrane segment spans residues 167–187 (RSVCLTFAFLFLLLAMLVQVV). Residues 188 to 224 (REETLELGLEPGLASMTQNLEPLLKKQGWDWALPVAK) are Cytoplasmic-facing. A helical membrane pass occupies residues 225 to 245 (LAIRVGLAVVGSVLGAFLTFP). Residues 246–263 (GLRLAQTHRDALTMSEDR) lie on the Extracellular side of the membrane. The chain crosses the membrane as a helical span at residues 264–284 (PMLQFLLHTSFLSPLFILWLW). The Cytoplasmic portion of the chain corresponds to 285 to 304 (TKPIARDFLHQPPFGETRFS). A helical transmembrane segment spans residues 305–325 (LLSDSAFDSGRLWLLVVLCLL). Topologically, residues 326 to 370 (RLAVTRPHLQAYLCLAKARVEQLRREAGRIEAREIQQRVVRVYCY) are extracellular. The helical transmembrane segment at 371 to 391 (VTVVSLQYLTPLILTLNCTLL) threads the bilayer. Over 392 to 449 (LKTLGGYSWGLGPAPLLSPDPSSASAAPIGSGEDEVQQTAARIAGALGGLLTPLFLRG) the chain is Cytoplasmic. Residues 450-470 (VLAYLIWWTAACQLLASLFGL) form a helical membrane-spanning segment. Topologically, residues 471-479 (YFHQHLAGS) are extracellular.

This sequence belongs to the TMEM161 family.

It is found in the membrane. In terms of biological role, may play a role in protection against oxidative stress. Overexpression leads to reduced levels of oxidant-induced DNA damage and apoptosis. The chain is Transmembrane protein 161A (TMEM161A) from Homo sapiens (Human).